A 65-amino-acid chain; its full sequence is Photosystem II reaction center protein J (65 aa).

The chain crosses the membrane as a helical span at residues 35–55 (LWLVATAGGTAVIFVLGIFFY).

Belongs to the PsbJ family. As to quaternary structure, PSII is composed of 1 copy each of membrane proteins PsbA, PsbB, PsbC, PsbD, PsbE, PsbF, PsbH, PsbI, PsbJ, PsbK, PsbL, PsbM, PsbT, PsbX, PsbY, Psb30/Ycf12, peripheral proteins PsbO, CyanoQ (PsbQ), PsbU, PsbV and a large number of cofactors. It forms dimeric complexes.

The protein resides in the cellular thylakoid membrane. Functionally, one of the components of the core complex of photosystem II (PSII). PSII is a light-driven water:plastoquinone oxidoreductase that uses light energy to abstract electrons from H(2)O, generating O(2) and a proton gradient subsequently used for ATP formation. It consists of a core antenna complex that captures photons, and an electron transfer chain that converts photonic excitation into a charge separation. The sequence is that of Photosystem II reaction center protein J from Prochlorococcus marinus (strain NATL1A).